Reading from the N-terminus, the 230-residue chain is MANVSKRIKALRAKVDRNKVYPVTEALALVKETATAKFDESVDAVINLGIDARKSDQLVRGALVLPHGTGKTKRVAVFAQGAAAEAAKAAGADIVGFEDLAEQVKGGMLDFDVAIATPDAMRIVGALGQVLGPRGLMPNPKVGTVTPDVATAVKNAKAGQVQYRTDKGGIVHCTIGRASFEVDALKENLAALVDALNKAKPASSKGVYLKKVSVSSTMGAGVRVDQSNLA.

It belongs to the universal ribosomal protein uL1 family. As to quaternary structure, part of the 50S ribosomal subunit.

Its function is as follows. Binds directly to 23S rRNA. The L1 stalk is quite mobile in the ribosome, and is involved in E site tRNA release. In terms of biological role, protein L1 is also a translational repressor protein, it controls the translation of the L11 operon by binding to its mRNA. This Methylobacillus flagellatus (strain ATCC 51484 / DSM 6875 / VKM B-1610 / KT) protein is Large ribosomal subunit protein uL1.